The primary structure comprises 467 residues: uncharacterized protein (467 aa).

Residues 416–467 are disordered; the sequence is KQQRAQTAVVGTTKELVSKATHMKPPRTPPGEAEHRKRSQSLAICQWNKNSR. Residues 455-467 are compositionally biased toward polar residues; the sequence is QSLAICQWNKNSR.

This is an uncharacterized protein from Homo sapiens (Human).